A 205-amino-acid polypeptide reads, in one-letter code: Putative 3-methyladenine DNA glycosylase (205 aa).

Belongs to the DNA glycosylase MPG family.

The sequence is that of Putative 3-methyladenine DNA glycosylase from Bacillus cereus (strain AH187).